Reading from the N-terminus, the 616-residue chain is Dihydroxy-acid dehydratase (616 aa).

Residue Asp81 participates in Mg(2+) binding. Position 122 (Cys122) interacts with [2Fe-2S] cluster. Residues Asp123 and Lys124 each coordinate Mg(2+). Lys124 is subject to N6-carboxylysine. Cys195 provides a ligand contact to [2Fe-2S] cluster. Glu491 serves as a coordination point for Mg(2+). The active-site Proton acceptor is Ser517.

The protein belongs to the IlvD/Edd family. In terms of assembly, homodimer. It depends on [2Fe-2S] cluster as a cofactor. The cofactor is Mg(2+).

The enzyme catalyses (2R)-2,3-dihydroxy-3-methylbutanoate = 3-methyl-2-oxobutanoate + H2O. The catalysed reaction is (2R,3R)-2,3-dihydroxy-3-methylpentanoate = (S)-3-methyl-2-oxopentanoate + H2O. It functions in the pathway amino-acid biosynthesis; L-isoleucine biosynthesis; L-isoleucine from 2-oxobutanoate: step 3/4. The protein operates within amino-acid biosynthesis; L-valine biosynthesis; L-valine from pyruvate: step 3/4. Functions in the biosynthesis of branched-chain amino acids. Catalyzes the dehydration of (2R,3R)-2,3-dihydroxy-3-methylpentanoate (2,3-dihydroxy-3-methylvalerate) into 2-oxo-3-methylpentanoate (2-oxo-3-methylvalerate) and of (2R)-2,3-dihydroxy-3-methylbutanoate (2,3-dihydroxyisovalerate) into 2-oxo-3-methylbutanoate (2-oxoisovalerate), the penultimate precursor to L-isoleucine and L-valine, respectively. The chain is Dihydroxy-acid dehydratase from Yersinia pseudotuberculosis serotype I (strain IP32953).